The chain runs to 152 residues: FMN reductase (NADH) RutF (152 aa).

This sequence belongs to the non-flavoprotein flavin reductase family. RutF subfamily.

It carries out the reaction FMNH2 + NAD(+) = FMN + NADH + 2 H(+). Catalyzes the reduction of FMN to FMNH2 which is used to reduce pyrimidine by RutA via the Rut pathway. The polypeptide is FMN reductase (NADH) RutF (Shigella flexneri).